The primary structure comprises 571 residues: Sulfite reductase [NADPH] hemoprotein beta-component (571 aa).

4 residues coordinate [4Fe-4S] cluster: C435, C441, C480, and C484. C484 contacts siroheme.

Belongs to the nitrite and sulfite reductase 4Fe-4S domain family. As to quaternary structure, alpha(8)-beta(8). The alpha component is a flavoprotein, the beta component is a hemoprotein. Requires siroheme as cofactor. [4Fe-4S] cluster is required as a cofactor.

The enzyme catalyses hydrogen sulfide + 3 NADP(+) + 3 H2O = sulfite + 3 NADPH + 4 H(+). It functions in the pathway sulfur metabolism; hydrogen sulfide biosynthesis; hydrogen sulfide from sulfite (NADPH route): step 1/1. In terms of biological role, component of the sulfite reductase complex that catalyzes the 6-electron reduction of sulfite to sulfide. This is one of several activities required for the biosynthesis of L-cysteine from sulfate. This chain is Sulfite reductase [NADPH] hemoprotein beta-component, found in Musicola paradisiaca (strain Ech703) (Dickeya paradisiaca).